Reading from the N-terminus, the 110-residue chain is Parvalbumin alpha (110 aa).

Residue Ser2 is modified to N-acetylserine. A phosphoserine mark is found at Ser2, Ser8, and Ser24. EF-hand domains lie at 39–74 (KSAD…FSSD) and 78–110 (LSAK…VAES). The Ca(2+) site is built by Asp52, Asp54, Ser56, Phe58, Glu60, and Glu63. Ser66 is modified (phosphoserine). Asp91, Asp93, Asp95, Lys97, and Glu102 together coordinate Ca(2+).

Functionally, in muscle, parvalbumin is thought to be involved in relaxation after contraction. It binds two calcium ions. This Rattus norvegicus (Rat) protein is Parvalbumin alpha (Pvalb).